The chain runs to 277 residues: MVSSNLQELIPALSRSIRQLPLHIETQKVLEFYCRNSSYKSLLVAQDISEFEKHNDHKYLEALIQKTHFLWDNPLPPFLKRFQLYHKELTNHWPYEYQRSLLSMSNPRKESQGYLWRDGKELALSNLRFEKHRWADENIIERLSPEQGTQLLHSIFHQYFFLKSHARLCYNNRKIPVPIVEIPLRPMGNDVADCRIRNLFKRKTAVVWNLLAWENRPLSTRNEQLLGEIITKSETRSMRRLYQRASRRAYVVTNEGKDPNGLQVPEFRPGEILQMSI.

This sequence belongs to the GEP5 family.

It localises to the mitochondrion. In terms of biological role, essential for respiratory growth and required for maintenance of mtDNA. Required for cell survival in the absence of prohibitins. This chain is Genetic interactor of prohibitin 5, mitochondrial (GEP5), found in Zygosaccharomyces rouxii (strain ATCC 2623 / CBS 732 / NBRC 1130 / NCYC 568 / NRRL Y-229).